The primary structure comprises 349 residues: Glycerol-3-phosphate dehydrogenase [NAD(P)+] (349 aa).

Ser-12, Trp-13, and Lys-107 together coordinate NADPH. The sn-glycerol 3-phosphate site is built by Lys-107, Gly-138, and Ser-140. Residue Ala-142 participates in NADPH binding. 5 residues coordinate sn-glycerol 3-phosphate: Lys-193, Asp-246, Ser-256, Arg-257, and Asn-258. Lys-193 acts as the Proton acceptor in catalysis. Arg-257 serves as a coordination point for NADPH. Residues Val-281 and Glu-283 each contribute to the NADPH site.

This sequence belongs to the NAD-dependent glycerol-3-phosphate dehydrogenase family.

It is found in the cytoplasm. It carries out the reaction sn-glycerol 3-phosphate + NAD(+) = dihydroxyacetone phosphate + NADH + H(+). The enzyme catalyses sn-glycerol 3-phosphate + NADP(+) = dihydroxyacetone phosphate + NADPH + H(+). It participates in membrane lipid metabolism; glycerophospholipid metabolism. Catalyzes the reduction of the glycolytic intermediate dihydroxyacetone phosphate (DHAP) to sn-glycerol 3-phosphate (G3P), the key precursor for phospholipid synthesis. The sequence is that of Glycerol-3-phosphate dehydrogenase [NAD(P)+] from Pelotomaculum thermopropionicum (strain DSM 13744 / JCM 10971 / SI).